The chain runs to 361 residues: UDP-3-O-acylglucosamine N-acyltransferase (361 aa).

His253 serves as the catalytic Proton acceptor.

Belongs to the transferase hexapeptide repeat family. LpxD subfamily. Homotrimer.

The enzyme catalyses a UDP-3-O-[(3R)-3-hydroxyacyl]-alpha-D-glucosamine + a (3R)-hydroxyacyl-[ACP] = a UDP-2-N,3-O-bis[(3R)-3-hydroxyacyl]-alpha-D-glucosamine + holo-[ACP] + H(+). It participates in bacterial outer membrane biogenesis; LPS lipid A biosynthesis. Catalyzes the N-acylation of UDP-3-O-acylglucosamine using 3-hydroxyacyl-ACP as the acyl donor. Is involved in the biosynthesis of lipid A, a phosphorylated glycolipid that anchors the lipopolysaccharide to the outer membrane of the cell. The polypeptide is UDP-3-O-acylglucosamine N-acyltransferase (Burkholderia mallei (strain ATCC 23344)).